The following is a 934-amino-acid chain: Serine/threonine-protein kinase PknD (934 aa).

In terms of domain architecture, Protein kinase spans 4–296 (YELIRLIGKG…ELRQALQPYL (293 aa)). Residues 10 to 18 (IGKGGMGEV) and Lys33 each bind ATP. Residue Asp138 is the Proton acceptor of the active site.

Belongs to the protein kinase superfamily. Ser/Thr protein kinase family. As to quaternary structure, interacts with Pkn1. In terms of processing, autophosphorylated on serine and threonine residues.

The enzyme catalyses L-seryl-[protein] + ATP = O-phospho-L-seryl-[protein] + ADP + H(+). The catalysed reaction is L-threonyl-[protein] + ATP = O-phospho-L-threonyl-[protein] + ADP + H(+). In terms of biological role, together with the serine/threonine kinase Pkn1, may play a role in the specific interactions with host proteins during intracellular growth. Autophosphorylates and also phosphorylates Pkn1. This chain is Serine/threonine-protein kinase PknD, found in Chlamydia trachomatis serovar D (strain ATCC VR-885 / DSM 19411 / UW-3/Cx).